Consider the following 117-residue polypeptide: Large ribosomal subunit protein bL20 (117 aa).

It belongs to the bacterial ribosomal protein bL20 family.

Functionally, binds directly to 23S ribosomal RNA and is necessary for the in vitro assembly process of the 50S ribosomal subunit. It is not involved in the protein synthesizing functions of that subunit. The chain is Large ribosomal subunit protein bL20 from Rickettsia canadensis (strain McKiel).